A 393-amino-acid chain; its full sequence is S-adenosylmethionine synthase 2 (393 aa).

Glu9 serves as a coordination point for Mg(2+). His15 provides a ligand contact to ATP. Glu43 contributes to the K(+) binding site. L-methionine contacts are provided by Glu56 and Gln99. ATP contacts are provided by residues 167 to 169 (DGK), 235 to 238 (SGRF), Asp246, 252 to 253 (RK), Ala269, Lys273, and Lys277. L-methionine is bound at residue Asp246. Lys277 lines the L-methionine pocket.

It belongs to the AdoMet synthase family. Homotetramer. Interacts with GRF3. Mn(2+) is required as a cofactor. The cofactor is Mg(2+). Co(2+) serves as cofactor. It depends on K(+) as a cofactor. Highly expressed in stems and roots. Detected in trichomes (at the protein level).

It localises to the cytoplasm. It catalyses the reaction L-methionine + ATP + H2O = S-adenosyl-L-methionine + phosphate + diphosphate. Its pathway is amino-acid biosynthesis; S-adenosyl-L-methionine biosynthesis; S-adenosyl-L-methionine from L-methionine: step 1/1. With respect to regulation, inhibited by 5,5'-dithiobis-2-nitrobenzoic acid (DTNB) and N-ethylmaleimide (NEM) (in vitro). In terms of biological role, catalyzes the formation of S-adenosylmethionine from methionine and ATP. The reaction comprises two steps that are both catalyzed by the same enzyme: formation of S-adenosylmethionine (AdoMet) and triphosphate, and subsequent hydrolysis of the triphosphate. This Arabidopsis thaliana (Mouse-ear cress) protein is S-adenosylmethionine synthase 2 (SAM2).